Here is a 219-residue protein sequence, read N- to C-terminus: MSHYRQRFLQLALDSNALCFGEFTLKSGRISPYFFNAGHFNSGAKTAALAQCYADAIDAANMNFDLVFGPAYKGIPLATALACEYAQRERDLLLTFNRKEVKNHGEGGTLIGAPLNGRKILIIDDVITAGTAIREVLRIIRNAGGTPTGVAVALNRQEIASETNRQSSVQALMAETGIPVVAIATLNDLLAFVEENASLAKFYEPLLAYKTHYGTEAPD.

Lys26 is a binding site for 5-phospho-alpha-D-ribose 1-diphosphate. 34–35 (FF) is an orotate binding site. Residues 72 to 73 (YK), Arg98, Lys99, Lys102, His104, and 124 to 132 (DDVITAGTA) each bind 5-phospho-alpha-D-ribose 1-diphosphate. 2 residues coordinate orotate: Thr128 and Arg156.

It belongs to the purine/pyrimidine phosphoribosyltransferase family. PyrE subfamily. As to quaternary structure, homodimer. Mg(2+) serves as cofactor.

The enzyme catalyses orotidine 5'-phosphate + diphosphate = orotate + 5-phospho-alpha-D-ribose 1-diphosphate. It functions in the pathway pyrimidine metabolism; UMP biosynthesis via de novo pathway; UMP from orotate: step 1/2. Catalyzes the transfer of a ribosyl phosphate group from 5-phosphoribose 1-diphosphate to orotate, leading to the formation of orotidine monophosphate (OMP). The polypeptide is Orotate phosphoribosyltransferase (Xylella fastidiosa (strain Temecula1 / ATCC 700964)).